Reading from the N-terminus, the 260-residue chain is NAD-capped RNA hydrolase NudC (260 aa).

K25 and R69 together coordinate substrate. C98 and C101 together coordinate Zn(2+). A substrate-binding site is contributed by E111. Residues C116 and C119 each contribute to the Zn(2+) site. Position 124 (Y124) interacts with substrate. Residues 125-248 (PQIAPCVIVA…TVARRLIEDT (124 aa)) form the Nudix hydrolase domain. The a divalent metal cation site is built by A158, E174, and E178. The short motif at 159–180 (GFVEVGETLEQAVSREVLEESN) is the Nudix box element. Residue 192–199 (QPWPFPHS) participates in substrate binding. A divalent metal cation is bound at residue E219. A241 is a substrate binding site.

Belongs to the Nudix hydrolase family. NudC subfamily. In terms of assembly, homodimer. Requires Mg(2+) as cofactor. Mn(2+) is required as a cofactor. The cofactor is Zn(2+).

The catalysed reaction is a 5'-end NAD(+)-phospho-ribonucleoside in mRNA + H2O = a 5'-end phospho-adenosine-phospho-ribonucleoside in mRNA + beta-nicotinamide D-ribonucleotide + 2 H(+). The enzyme catalyses NAD(+) + H2O = beta-nicotinamide D-ribonucleotide + AMP + 2 H(+). It carries out the reaction NADH + H2O = reduced beta-nicotinamide D-ribonucleotide + AMP + 2 H(+). Its function is as follows. mRNA decapping enzyme that specifically removes the nicotinamide adenine dinucleotide (NAD) cap from a subset of mRNAs by hydrolyzing the diphosphate linkage to produce nicotinamide mononucleotide (NMN) and 5' monophosphate mRNA. The NAD-cap is present at the 5'-end of some mRNAs and stabilizes RNA against 5'-processing. Has preference for mRNAs with a 5'-end purine. Catalyzes the hydrolysis of a broad range of dinucleotide pyrophosphates. The polypeptide is NAD-capped RNA hydrolase NudC (Yersinia pestis bv. Antiqua (strain Antiqua)).